A 303-amino-acid polypeptide reads, in one-letter code: Regulatory protein PocR (303 aa).

The HTH araC/xylS-type domain maps to Lys-195–Gln-293. 2 DNA-binding regions (H-T-H motif) span residues Glu-212–Gln-233 and Ile-260–Tyr-283.

It functions in the pathway cofactor biosynthesis; adenosylcobalamin biosynthesis [regulation]. Its pathway is polyol metabolism; 1,2-propanediol degradation [regulation]. Functionally, positive regulatory protein of pdu and cob operons. Positively autoregulates its own expression. The sequence is that of Regulatory protein PocR (pocR) from Salmonella typhimurium (strain LT2 / SGSC1412 / ATCC 700720).